We begin with the raw amino-acid sequence, 465 residues long: Probable tRNA modification GTPase MnmE (465 aa).

(6S)-5-formyl-5,6,7,8-tetrahydrofolate contacts are provided by R23, E85, and R124. In terms of domain architecture, TrmE-type G spans 221 to 384 (GTKVCIIGKP…LNNCILDLSS (164 aa)). Residues 231 to 236 (NVGKSS), 250 to 256 (TNFPGTT), and 275 to 278 (DTAG) each bind GTP. 2 residues coordinate Mg(2+): S235 and T256. K465 is a (6S)-5-formyl-5,6,7,8-tetrahydrofolate binding site.

The protein belongs to the TRAFAC class TrmE-Era-EngA-EngB-Septin-like GTPase superfamily. TrmE GTPase family. It depends on K(+) as a cofactor.

Its subcellular location is the plastid. The protein resides in the chloroplast. Exhibits a very high intrinsic GTPase hydrolysis rate. Involved in the addition of a carboxymethylaminomethyl (cmnm) group at the wobble position (U34) of certain tRNAs, forming tRNA-cmnm(5)s(2)U34. This chain is Probable tRNA modification GTPase MnmE, found in Cyanidium caldarium (Red alga).